Reading from the N-terminus, the 167-residue chain is MSDENNQQDAQQAAGGPQFAIQRIYLKDLSFETPMGVEAFTKAFKPNIQQDLNIQANQVEEGLFEVVLLLTVTARTDNRAVFLVEIKQAGLFAIGGLEGGAVTQLINTACPQILFPYAREAIDSILNRGSFPPLMLPPINFDAVFVQAISQAQQQAETEKAQGETIN.

It belongs to the SecB family. Homotetramer, a dimer of dimers. One homotetramer interacts with 1 SecA dimer.

It localises to the cytoplasm. One of the proteins required for the normal export of preproteins out of the cell cytoplasm. It is a molecular chaperone that binds to a subset of precursor proteins, maintaining them in a translocation-competent state. It also specifically binds to its receptor SecA. This chain is Protein-export protein SecB, found in Cellvibrio japonicus (strain Ueda107) (Pseudomonas fluorescens subsp. cellulosa).